The following is a 473-amino-acid chain: Photosystem II CP43 reaction center protein (473 aa).

Positions 1 to 14 (MKTLYSLRRFYPVE) are excised as a propeptide. Threonine 15 bears the N-acetylthreonine mark. The residue at position 15 (threonine 15) is a Phosphothreonine. Transmembrane regions (helical) follow at residues 69 to 93 (LFEV…PHLA), 134 to 155 (LLGP…KDRN), 178 to 200 (KALY…RKIT), 255 to 275 (KPFA…LSYS), and 291 to 312 (WFNN…ASQA). Residue glutamate 367 coordinates [CaMn4O5] cluster. The chain crosses the membrane as a helical span at residues 447–471 (RARAAAAGFEKGIDRDFEPVLSMTP).

Belongs to the PsbB/PsbC family. PsbC subfamily. In terms of assembly, PSII is composed of 1 copy each of membrane proteins PsbA, PsbB, PsbC, PsbD, PsbE, PsbF, PsbH, PsbI, PsbJ, PsbK, PsbL, PsbM, PsbT, PsbX, PsbY, PsbZ, Psb30/Ycf12, at least 3 peripheral proteins of the oxygen-evolving complex and a large number of cofactors. It forms dimeric complexes. Binds multiple chlorophylls and provides some of the ligands for the Ca-4Mn-5O cluster of the oxygen-evolving complex. It may also provide a ligand for a Cl- that is required for oxygen evolution. PSII binds additional chlorophylls, carotenoids and specific lipids. is required as a cofactor.

It is found in the plastid. The protein resides in the chloroplast thylakoid membrane. One of the components of the core complex of photosystem II (PSII). It binds chlorophyll and helps catalyze the primary light-induced photochemical processes of PSII. PSII is a light-driven water:plastoquinone oxidoreductase, using light energy to abstract electrons from H(2)O, generating O(2) and a proton gradient subsequently used for ATP formation. The chain is Photosystem II CP43 reaction center protein from Piper cenocladum (Ant piper).